The chain runs to 35 residues: Kappa-theraphotoxin-Tb1c (35 aa).

Cystine bridges form between Cys3–Cys18, Cys10–Cys23, and Cys17–Cys30.

The protein belongs to the neurotoxin 10 (Hwtx-1) family. 59 (Tltx) subfamily. In terms of assembly, monomer. In terms of tissue distribution, expressed by the venom gland.

It localises to the secreted. Its function is as follows. Blocks Kv4.2/KCND2 voltage-gated potassium channels probably by shifting the voltage-dependence of channel activation to more depolarized potentials and by binding to the S3-S4 linker region of the voltage sensor domain. The chain is Kappa-theraphotoxin-Tb1c from Theraphosa blondi (Goliath birdeating spider).